The following is a 147-amino-acid chain: Nucleoside diphosphate kinase (147 aa).

6 residues coordinate ATP: lysine 11, phenylalanine 59, arginine 87, threonine 93, arginine 104, and asparagine 114. The active-site Pros-phosphohistidine intermediate is the histidine 117.

It belongs to the NDK family. In terms of assembly, homotetramer. It depends on Mg(2+) as a cofactor.

The protein resides in the cytoplasm. It catalyses the reaction a 2'-deoxyribonucleoside 5'-diphosphate + ATP = a 2'-deoxyribonucleoside 5'-triphosphate + ADP. The catalysed reaction is a ribonucleoside 5'-diphosphate + ATP = a ribonucleoside 5'-triphosphate + ADP. Functionally, major role in the synthesis of nucleoside triphosphates other than ATP. The ATP gamma phosphate is transferred to the NDP beta phosphate via a ping-pong mechanism, using a phosphorylated active-site intermediate. This is Nucleoside diphosphate kinase from Anaeromyxobacter sp. (strain K).